Consider the following 71-residue polypeptide: Small ribosomal subunit protein bS21 (71 aa).

Positions 50-59 (AAAVKRHAKK) are enriched in basic residues. A disordered region spans residues 50-71 (AAAVKRHAKKVQREQRRAVRLY). Positions 60 to 71 (VQREQRRAVRLY) are enriched in basic and acidic residues.

It belongs to the bacterial ribosomal protein bS21 family.

This is Small ribosomal subunit protein bS21 from Pseudomonas entomophila (strain L48).